Consider the following 64-residue polypeptide: Transcription factor P13 (64 aa).

In terms of biological role, transcription factor that regulates expression of phage structural components with protein P14. In Pseudoalteromonas phage PM2 (Bacteriophage PM2), this protein is Transcription factor P13.